Here is a 156-residue protein sequence, read N- to C-terminus: Small ribosomal subunit protein uS7 (156 aa).

Belongs to the universal ribosomal protein uS7 family. Part of the 30S ribosomal subunit. Contacts proteins S9 and S11.

One of the primary rRNA binding proteins, it binds directly to 16S rRNA where it nucleates assembly of the head domain of the 30S subunit. Is located at the subunit interface close to the decoding center, probably blocks exit of the E-site tRNA. The chain is Small ribosomal subunit protein uS7 from Salinispora tropica (strain ATCC BAA-916 / DSM 44818 / JCM 13857 / NBRC 105044 / CNB-440).